The chain runs to 54 residues: uncharacterized protein (54 aa).

The signal sequence occupies residues 1-23 (MKELIFFLLIIVILFVVFMVVSS).

This is an uncharacterized protein from Acheta domesticus (House cricket).